Here is a 1068-residue protein sequence, read N- to C-terminus: Target of Nesh-SH3 (1068 aa).

An N-terminal signal peptide occupies residues 1–21 (MLSSLGCLLLCGSITLALGNA). N37 carries N-linked (GlcNAc...) asparagine glycosylation. The Fibronectin type-III 1 domain occupies 116–214 (KPLQLVVGTL…KIFNHKTVVG (99 aa)). Disordered regions lie at residues 315–351 (SKTPEVEKISARPTTVTPETVPRSTKPTTSSALDVSE) and 384–811 (VFSS…SITD). Over residues 326–339 (RPTTVTPETVPRST) the composition is skewed to low complexity. The segment covering 340 to 351 (KPTTSSALDVSE) has biased composition (polar residues). Residues 447-462 (QPTTPAPQQTTSIPST) are compositionally biased toward low complexity. Residues 463–473 (PKRRPRPKPPR) show a composition bias toward basic residues. Residues 482–499 (AGTITPKISKSPEPTWTT) show a composition bias toward polar residues. Residues 532–544 (RAPPKPKTSPRPR) show a composition bias toward pro residues. Polar residues predominate over residues 562–574 (PKTSPSPEVSYTT). Low complexity-rich tracts occupy residues 603–631 (IPFIPMISPSPSQEELQTTLEETDQSTQE) and 737–750 (PPLRSTPRPTGTPL). Polar residues predominate over residues 802–811 (PDNSPCSITD). The region spanning 833–926 (PPTNLTVVTV…NTVAFSTESA (94 aa)) is the Fibronectin type-III 2 domain.

As to quaternary structure, probably interacts with ABI3. Expressed in brain, heart, lung, liver, pancreas kidney and placenta.

It is found in the secreted. The chain is Target of Nesh-SH3 from Homo sapiens (Human).